The chain runs to 347 residues: Phenylalanine--tRNA ligase alpha subunit (347 aa).

E268 serves as a coordination point for Mg(2+).

The protein belongs to the class-II aminoacyl-tRNA synthetase family. Phe-tRNA synthetase alpha subunit type 1 subfamily. Tetramer of two alpha and two beta subunits. Requires Mg(2+) as cofactor.

It localises to the cytoplasm. The enzyme catalyses tRNA(Phe) + L-phenylalanine + ATP = L-phenylalanyl-tRNA(Phe) + AMP + diphosphate + H(+). The sequence is that of Phenylalanine--tRNA ligase alpha subunit from Leptothrix cholodnii (strain ATCC 51168 / LMG 8142 / SP-6) (Leptothrix discophora (strain SP-6)).